The following is a 304-amino-acid chain: Thymidylate synthase (304 aa).

Residues Arg-30 and 157-158 (RR) contribute to the dUMP site. Cys-177 acts as the Nucleophile in catalysis. DUMP-binding positions include 206–209 (RSCD), Asn-217, and 247–249 (HVY). Asp-209 contributes to the (6R)-5,10-methylene-5,6,7,8-tetrahydrofolate binding site.

Belongs to the thymidylate synthase family. In terms of assembly, homodimer.

It localises to the nucleus. It catalyses the reaction dUMP + (6R)-5,10-methylene-5,6,7,8-tetrahydrofolate = 7,8-dihydrofolate + dTMP. The protein operates within pyrimidine metabolism; dTTP biosynthesis. Its activity is regulated as follows. Inhibited by 5-fluoro-2'-deoxyuridine 5'-monophosphate (FdUMP). Its function is as follows. Thymidylate synthase required for de novo biosynthesis of pyrimidine deoxyribonucleotides. Required for both nuclear and mitochondrial DNA synthesis. The polypeptide is Thymidylate synthase (CDC21) (Saccharomyces cerevisiae (strain ATCC 204508 / S288c) (Baker's yeast)).